The primary structure comprises 503 residues: Aminoaldehyde dehydrogenase 1, peroxisomal (503 aa).

Na(+) is bound by residues asparagine 27, isoleucine 28, aspartate 99, and leucine 189. 238 to 245 (GSSATGSK) is an NAD(+) binding site. Glutamate 260 functions as the Proton acceptor in the catalytic mechanism. NAD(+) contacts are provided by cysteine 294 and glutamate 393. The active-site Nucleophile is the cysteine 294. Residues 501–503 (SKL) carry the Microbody targeting signal motif.

This sequence belongs to the aldehyde dehydrogenase family. As to quaternary structure, forms homodimers.

The protein localises to the peroxisome. It carries out the reaction 3-aminopropanal + NAD(+) + H2O = beta-alanine + NADH + 2 H(+). It catalyses the reaction 4-aminobutanal + NAD(+) + H2O = 4-aminobutanoate + NADH + 2 H(+). The catalysed reaction is 4-guanidinobutanal + NAD(+) + H2O = 4-guanidinobutanoate + NADH + 2 H(+). The protein operates within amine and polyamine biosynthesis; betaine biosynthesis via choline pathway; betaine from betaine aldehyde: step 1/1. In terms of biological role, dehydrogenase that catalyzes the oxidation of several aminoaldehydes. Metabolizes and detoxifies aldehyde products of polyamine degradation to non-toxic amino acids. Catalyzes the oxidation of 3-aminopropanal to beta-alanine. Catalyzes the oxidation of 4-aminobutanal to 4-aminobutanoate. Catalyzes the oxidation of 4-guanidinobutanal to 4-guanidinobutanoate. This is Aminoaldehyde dehydrogenase 1, peroxisomal from Pisum sativum (Garden pea).